A 188-amino-acid chain; its full sequence is Probable nicotinate-nucleotide adenylyltransferase (188 aa).

Belongs to the NadD family.

The catalysed reaction is nicotinate beta-D-ribonucleotide + ATP + H(+) = deamido-NAD(+) + diphosphate. It functions in the pathway cofactor biosynthesis; NAD(+) biosynthesis; deamido-NAD(+) from nicotinate D-ribonucleotide: step 1/1. Functionally, catalyzes the reversible adenylation of nicotinate mononucleotide (NaMN) to nicotinic acid adenine dinucleotide (NaAD). The protein is Probable nicotinate-nucleotide adenylyltransferase of Listeria monocytogenes serotype 4a (strain HCC23).